The chain runs to 399 residues: Phosphoglycerate kinase (399 aa).

Substrate-binding positions include 22-24 (DLN), Arg37, 60-63 (HFGR), Arg119, and Arg152. ATP-binding positions include Lys202, Glu324, and 354-357 (GGDT).

The protein belongs to the phosphoglycerate kinase family. As to quaternary structure, monomer.

The protein resides in the cytoplasm. The enzyme catalyses (2R)-3-phosphoglycerate + ATP = (2R)-3-phospho-glyceroyl phosphate + ADP. It functions in the pathway carbohydrate degradation; glycolysis; pyruvate from D-glyceraldehyde 3-phosphate: step 2/5. The polypeptide is Phosphoglycerate kinase (Rhizobium meliloti (strain 1021) (Ensifer meliloti)).